A 192-amino-acid chain; its full sequence is Fe/S biogenesis protein NfuA (192 aa).

The [4Fe-4S] cluster site is built by C149 and C152.

The protein belongs to the NfuA family. As to quaternary structure, homodimer. The cofactor is [4Fe-4S] cluster.

Involved in iron-sulfur cluster biogenesis. Binds a 4Fe-4S cluster, can transfer this cluster to apoproteins, and thereby intervenes in the maturation of Fe/S proteins. Could also act as a scaffold/chaperone for damaged Fe/S proteins. The protein is Fe/S biogenesis protein NfuA of Aeromonas hydrophila subsp. hydrophila (strain ATCC 7966 / DSM 30187 / BCRC 13018 / CCUG 14551 / JCM 1027 / KCTC 2358 / NCIMB 9240 / NCTC 8049).